Consider the following 154-residue polypeptide: Large ribosomal subunit protein uL13 (154 aa).

Belongs to the universal ribosomal protein uL13 family. In terms of assembly, part of the 50S ribosomal subunit.

Its function is as follows. This protein is one of the early assembly proteins of the 50S ribosomal subunit, although it is not seen to bind rRNA by itself. It is important during the early stages of 50S assembly. The sequence is that of Large ribosomal subunit protein uL13 from Rhodopseudomonas palustris (strain BisB18).